A 237-amino-acid polypeptide reads, in one-letter code: Phosphoribosylaminoimidazole-succinocarboxamide synthase (237 aa).

It belongs to the SAICAR synthetase family.

It catalyses the reaction 5-amino-1-(5-phospho-D-ribosyl)imidazole-4-carboxylate + L-aspartate + ATP = (2S)-2-[5-amino-1-(5-phospho-beta-D-ribosyl)imidazole-4-carboxamido]succinate + ADP + phosphate + 2 H(+). Its pathway is purine metabolism; IMP biosynthesis via de novo pathway; 5-amino-1-(5-phospho-D-ribosyl)imidazole-4-carboxamide from 5-amino-1-(5-phospho-D-ribosyl)imidazole-4-carboxylate: step 1/2. The sequence is that of Phosphoribosylaminoimidazole-succinocarboxamide synthase from Alteromonas mediterranea (strain DSM 17117 / CIP 110805 / LMG 28347 / Deep ecotype).